Consider the following 163-residue polypeptide: Mediator of RNA polymerase II transcription subunit 10 (163 aa).

The disordered stretch occupies residues 57–79; that stretch reads AAPDPSYVQSPPSRTGLSPADPP. Residues 63 to 72 show a composition bias toward polar residues; sequence YVQSPPSRTG.

The protein belongs to the Mediator complex subunit 10 family. As to quaternary structure, component of the Mediator complex.

The protein localises to the nucleus. Component of the Mediator complex, a coactivator involved in the regulated transcription of nearly all RNA polymerase II-dependent genes. Mediator functions as a bridge to convey information from gene-specific regulatory proteins to the basal RNA polymerase II transcription machinery. Mediator is recruited to promoters by direct interactions with regulatory proteins and serves as a scaffold for the assembly of a functional preinitiation complex with RNA polymerase II and the general transcription factors. The protein is Mediator of RNA polymerase II transcription subunit 10 (NUT2) of Coccidioides immitis (strain RS) (Valley fever fungus).